A 580-amino-acid polypeptide reads, in one-letter code: DNA ligase B (580 aa).

The active-site N6-AMP-lysine intermediate is Lys135.

The protein belongs to the NAD-dependent DNA ligase family. LigB subfamily.

The enzyme catalyses NAD(+) + (deoxyribonucleotide)n-3'-hydroxyl + 5'-phospho-(deoxyribonucleotide)m = (deoxyribonucleotide)n+m + AMP + beta-nicotinamide D-nucleotide.. Catalyzes the formation of phosphodiester linkages between 5'-phosphoryl and 3'-hydroxyl groups in double-stranded DNA using NAD as a coenzyme and as the energy source for the reaction. In Photorhabdus laumondii subsp. laumondii (strain DSM 15139 / CIP 105565 / TT01) (Photorhabdus luminescens subsp. laumondii), this protein is DNA ligase B.